The chain runs to 1139 residues: Protein lin-25 (1139 aa).

The Nuclear localization signal signature appears at 695–701; it reads IKKKKDP.

As to expression, expressed in seam cells and all six vulva precursor cells (VPC). After VPC division, expression is restricted to descendants of the VPC cell lineages P5.p, P6.p and P7.p (at protein level).

The protein resides in the nucleus. The protein localises to the cytoplasm. Its function is as follows. Participates in the inductive signaling pathway downstream of let-60 Ras and the RAF/MAP kinase cascade to regulate specification and differentiation of many cell types. Positively regulates the fate of vulval precursor cells. Required for induction of the P12 and excretory duct cell fates. In males, it is also required for proper formation of spicules. Does not function in the signaling pathway that promotes exit from pachytene. Plays a role in responses to M.nematophilum-mediated bacterial infection by promoting tail swelling and preventing constipation. The sequence is that of Protein lin-25 (lin-25) from Caenorhabditis elegans.